The sequence spans 322 residues: Cytochrome c biogenesis protein CcsA (322 aa).

8 helical membrane-spanning segments follow: residues I9–L29, G44–G64, L71–F91, L98–L118, M143–I163, V226–N246, W253–L273, and A287–L307.

The protein belongs to the CcmF/CycK/Ccl1/NrfE/CcsA family. In terms of assembly, may interact with Ccs1.

It is found in the plastid. The protein resides in the chloroplast thylakoid membrane. Functionally, required during biogenesis of c-type cytochromes (cytochrome c6 and cytochrome f) at the step of heme attachment. This chain is Cytochrome c biogenesis protein CcsA, found in Helianthus annuus (Common sunflower).